The primary structure comprises 155 residues: Small ribosomal subunit protein uS7cz/uS7cy (155 aa).

The protein belongs to the universal ribosomal protein uS7 family. As to quaternary structure, part of the 30S ribosomal subunit.

Its subcellular location is the plastid. The protein resides in the chloroplast. Its function is as follows. One of the primary rRNA binding proteins, it binds directly to 16S rRNA where it nucleates assembly of the head domain of the 30S subunit. This Cucumis sativus (Cucumber) protein is Small ribosomal subunit protein uS7cz/uS7cy (rps7-A).